A 581-amino-acid polypeptide reads, in one-letter code: Arginine--tRNA ligase (581 aa).

Positions 126-136 match the 'HIGH' region motif; it reads PNLAKEMHVGH.

It belongs to the class-I aminoacyl-tRNA synthetase family. Monomer.

It localises to the cytoplasm. The catalysed reaction is tRNA(Arg) + L-arginine + ATP = L-arginyl-tRNA(Arg) + AMP + diphosphate. This is Arginine--tRNA ligase from Shewanella putrefaciens (strain CN-32 / ATCC BAA-453).